A 36-amino-acid polypeptide reads, in one-letter code: Cytochrome b6-f complex subunit 7 (36 aa).

Residues 5–25 (IFFVAGLVFVLTLVGMAIGFG) form a helical membrane-spanning segment.

Belongs to the PetM family. The 4 large subunits of the cytochrome b6-f complex are cytochrome b6, subunit IV (17 kDa polypeptide, PetD), cytochrome f and the Rieske protein, while the 4 small subunits are PetG, PetL, PetM and PetN. The complex functions as a dimer.

The protein localises to the cell inner membrane. Its function is as follows. Component of the cytochrome b6-f complex, which mediates electron transfer between photosystem II (PSII) and photosystem I (PSI), cyclic electron flow around PSI, and state transitions. This Gloeobacter violaceus (strain ATCC 29082 / PCC 7421) protein is Cytochrome b6-f complex subunit 7.